A 465-amino-acid chain; its full sequence is MAMTGSTPCSSMSNHTKERVTMTKVTLENFYSNLIAQHEEREMRQKKLEKVMEEEGLKDEEKRLRRSAHARKETEFLRLKRTRLGLEDFESLKVIGRGAFGEVRLVQKKDTGHVYAMKILRKADMLEKEQVGHIRAERDILVEADSLWVVKMFYSFQDKLNLYLIMEFLPGGDMMTLLMKKDTLTEEETQFYIAETVLAIDSIHQLGFIHRDIKPDNLLLDSKGHVKLSDFGLCTGLKKAHRTEFYRNLNHSLPSDFTFQNMNSKRKAETWKRNRRQLAFSTVGTPDYIAPEVFMQTGYNKLCDWWSLGVIMYEMLIGYPPFCSETPQETYKKVMNWKETLTFPPEVPISEKAKDLILRFCCEWEHRIGAPGVEEIKSNSFFEGVDWEHIRERPAAISIEIKSIDDTSNFDEFPESDILKPTVATSNHPETDYKNKDWVFINYTYKRFEGLTARGAIPSYMKAAK.

Ala-2 bears the N-acetylalanine mark. The interaction with S100B stretch occupies residues 62-87 (KRLRRSAHARKETEFLRLKRTRLGLE). Thr-74 is subject to Phosphothreonine. Residues 89 to 382 (FESLKVIGRG…VEEIKSNSFF (294 aa)) enclose the Protein kinase domain. ATP-binding positions include 95–103 (IGRGAFGEV) and Lys-118. Asp-212 (proton acceptor) is an active-site residue. Ser-264 is modified (phosphoserine). At Ser-281 the chain carries Phosphoserine; by autocatalysis. Residues 306–311 (WSLGVI) carry the UFM1-interacting motif (UFIM) motif. The AGC-kinase C-terminal domain maps to 383 to 455 (EGVDWEHIRE…KRFEGLTARG (73 aa)). Thr-444 carries the post-translational modification Phosphothreonine; by STK24/MST3.

Belongs to the protein kinase superfamily. AGC Ser/Thr protein kinase family. In terms of assembly, homodimeric S100B binds two molecules of STK38. Interacts with MOB1 and MOB2. Interacts with MAP3K1 and MAP3K2 (via the kinase catalytic domain). Forms a tripartite complex with MOBKL1B and STK3/MST2. Interacts with MICAL1; leading to inhibit the protein kinase activity by antagonizing activation by MST1/STK4. Requires Mg(2+) as cofactor. Post-translationally, ISGylated. In terms of processing, phosphorylated by STK3/MST2 and this is enhanced by MOBKL1B. As to expression, ubiquitously expressed with highest levels observed in peripheral blood leukocytes.

Its subcellular location is the nucleus. It is found in the cytoplasm. It localises to the chromosome. It catalyses the reaction L-seryl-[protein] + ATP = O-phospho-L-seryl-[protein] + ADP + H(+). The enzyme catalyses L-threonyl-[protein] + ATP = O-phospho-L-threonyl-[protein] + ADP + H(+). With respect to regulation, activated by binding of S100B which releases autoinhibitory N-lobe interactions, enabling ATP to bind and the autophosphorylation of Ser-281. Thr-444 then undergoes calcium-dependent phosphorylation by STK24/MST3. Interactions between phosphorylated Thr-444 and the N-lobe promote additional structural changes that complete the activation of the kinase. Autoinhibition is also released by the binding of MOB1/MOBKL1A and MOB2/HCCA2 to the N-terminal of STK38. In terms of biological role, serine/threonine-protein kinase that acts as a negative regulator of MAP3K1/2 signaling. Converts MAP3K2 from its phosphorylated form to its non-phosphorylated form and inhibits autophosphorylation of MAP3K2. Acts as an ufmylation 'reader' in a kinase-independent manner: specifically recognizes and binds mono-ufmylated histone H4 in response to DNA damage, promoting the recruitment of SUV39H1 to the double-strand breaks, resulting in ATM activation. This is Serine/threonine-protein kinase 38 from Homo sapiens (Human).